Reading from the N-terminus, the 503-residue chain is AMP phosphorylase (503 aa).

AMP is bound by residues glycine 168, 194-199 (SRAITS), and threonine 203. The Proton donor role is filled by aspartate 256. 2 residues coordinate AMP: serine 264 and lysine 288.

Belongs to the thymidine/pyrimidine-nucleoside phosphorylase family. Type 2 subfamily.

It catalyses the reaction AMP + phosphate = alpha-D-ribose 1,5-bisphosphate + adenine. The catalysed reaction is CMP + phosphate = cytosine + alpha-D-ribose 1,5-bisphosphate. The enzyme catalyses UMP + phosphate = alpha-D-ribose 1,5-bisphosphate + uracil. Functionally, catalyzes the conversion of AMP and phosphate to adenine and ribose 1,5-bisphosphate (R15P). Exhibits phosphorylase activity toward CMP and UMP in addition to AMP. Functions in an archaeal AMP degradation pathway, together with R15P isomerase and RubisCO. In Methanocaldococcus jannaschii (strain ATCC 43067 / DSM 2661 / JAL-1 / JCM 10045 / NBRC 100440) (Methanococcus jannaschii), this protein is AMP phosphorylase.